The sequence spans 257 residues: NAD-dependent protein deacylase (257 aa).

The region spanning 1–252 (MLGHAAKLLA…LRRVKDIMAE (252 aa)) is the Deacetylase sirtuin-type domain. 20-39 (GAGISAESGIPTFRGRNGLW) is an NAD(+) binding site. Substrate contacts are provided by tyrosine 64 and arginine 67. 98–101 (QNVD) contributes to the NAD(+) binding site. Catalysis depends on histidine 116, which acts as the Proton acceptor. Positions 124, 127, 151, and 154 each coordinate Zn(2+). NAD(+)-binding positions include 191–193 (GTS), 217–219 (NVE), and alanine 235.

The protein belongs to the sirtuin family. Class III subfamily. Requires Zn(2+) as cofactor.

The protein resides in the cytoplasm. The catalysed reaction is N(6)-acetyl-L-lysyl-[protein] + NAD(+) + H2O = 2''-O-acetyl-ADP-D-ribose + nicotinamide + L-lysyl-[protein]. It carries out the reaction N(6)-succinyl-L-lysyl-[protein] + NAD(+) + H2O = 2''-O-succinyl-ADP-D-ribose + nicotinamide + L-lysyl-[protein]. NAD-dependent lysine deacetylase and desuccinylase that specifically removes acetyl and succinyl groups on target proteins. Modulates the activities of several proteins which are inactive in their acylated form. Deacetylates the N-terminal lysine residue of Alba, the major archaeal chromatin protein and that, in turn, increases Alba's DNA binding affinity, thereby repressing transcription. This chain is NAD-dependent protein deacylase, found in Thermococcus kodakarensis (strain ATCC BAA-918 / JCM 12380 / KOD1) (Pyrococcus kodakaraensis (strain KOD1)).